Here is a 377-residue protein sequence, read N- to C-terminus: Serine protease inhibitor (377 aa).

An N-terminal signal peptide occupies residues 1–27 (MAALQAAVSSQLAISFFSSLIVPGAEK). An N-linked (GlcNAc...) asparagine glycan is attached at Asn-301. The RCL stretch occupies residues 328 to 349 (GTEAAAATGFGVNFMSMPMQVR). Asn-361 carries an N-linked (GlcNAc...) asparagine glycan.

The protein belongs to the serpin family.

In terms of biological role, inhibitor of serine proteases. Inhibits chymotrypsin, cathepsin G and human neutrophil elastase. The polypeptide is Serine protease inhibitor (Cyanea capillata (Lion's mane jellyfish)).